Here is a 415-residue protein sequence, read N- to C-terminus: Serine hydroxymethyltransferase (415 aa).

(6S)-5,6,7,8-tetrahydrofolate contacts are provided by residues Leu121 and Gly125 to Leu127. An N6-(pyridoxal phosphate)lysine modification is found at Lys230. Position 355–357 (Ser355–Phe357) interacts with (6S)-5,6,7,8-tetrahydrofolate.

It belongs to the SHMT family. As to quaternary structure, homodimer. Pyridoxal 5'-phosphate is required as a cofactor.

The protein resides in the cytoplasm. The catalysed reaction is (6R)-5,10-methylene-5,6,7,8-tetrahydrofolate + glycine + H2O = (6S)-5,6,7,8-tetrahydrofolate + L-serine. The protein operates within one-carbon metabolism; tetrahydrofolate interconversion. It participates in amino-acid biosynthesis; glycine biosynthesis; glycine from L-serine: step 1/1. Its function is as follows. Catalyzes the reversible interconversion of serine and glycine with tetrahydrofolate (THF) serving as the one-carbon carrier. This reaction serves as the major source of one-carbon groups required for the biosynthesis of purines, thymidylate, methionine, and other important biomolecules. Also exhibits THF-independent aldolase activity toward beta-hydroxyamino acids, producing glycine and aldehydes, via a retro-aldol mechanism. The polypeptide is Serine hydroxymethyltransferase (Lactococcus lactis subsp. lactis (strain IL1403) (Streptococcus lactis)).